Consider the following 291-residue polypeptide: uncharacterized protein (291 aa).

NAD(+) contacts are provided by residues 5-19 (AFIG…MAGH) and T97. The active site involves K172. K240 provides a ligand contact to NAD(+).

It belongs to the HIBADH-related family.

This is an uncharacterized protein from Shewanella frigidimarina (strain NCIMB 400).